A 364-amino-acid chain; its full sequence is tRNA 2-selenouridine synthase (364 aa).

The Rhodanese domain maps to 14–137 (LIADTPIIDV…LRQTAIQATI (124 aa)). Cys-97 (S-selanylcysteine intermediate) is an active-site residue.

The protein belongs to the SelU family. In terms of assembly, monomer.

It carries out the reaction 5-methylaminomethyl-2-thiouridine(34) in tRNA + selenophosphate + (2E)-geranyl diphosphate + H2O + H(+) = 5-methylaminomethyl-2-selenouridine(34) in tRNA + (2E)-thiogeraniol + phosphate + diphosphate. The catalysed reaction is 5-methylaminomethyl-2-thiouridine(34) in tRNA + (2E)-geranyl diphosphate = 5-methylaminomethyl-S-(2E)-geranyl-thiouridine(34) in tRNA + diphosphate. It catalyses the reaction 5-methylaminomethyl-S-(2E)-geranyl-thiouridine(34) in tRNA + selenophosphate + H(+) = 5-methylaminomethyl-2-(Se-phospho)selenouridine(34) in tRNA + (2E)-thiogeraniol. The enzyme catalyses 5-methylaminomethyl-2-(Se-phospho)selenouridine(34) in tRNA + H2O = 5-methylaminomethyl-2-selenouridine(34) in tRNA + phosphate. Its function is as follows. Involved in the post-transcriptional modification of the uridine at the wobble position (U34) of tRNA(Lys), tRNA(Glu) and tRNA(Gln). Catalyzes the conversion of 2-thiouridine (S2U-RNA) to 2-selenouridine (Se2U-RNA). Acts in a two-step process involving geranylation of 2-thiouridine (S2U) to S-geranyl-2-thiouridine (geS2U) and subsequent selenation of the latter derivative to 2-selenouridine (Se2U) in the tRNA chain. The protein is tRNA 2-selenouridine synthase of Shigella dysenteriae serotype 1 (strain Sd197).